The primary structure comprises 629 residues: 1-deoxy-D-xylulose-5-phosphate synthase (629 aa).

Residues His78 and 119-121 contribute to the thiamine diphosphate site; that span reads AHS. Residue Asp150 coordinates Mg(2+). Residues 151-152, Asn179, Tyr286, and Glu368 contribute to the thiamine diphosphate site; that span reads GA. Asn179 serves as a coordination point for Mg(2+).

The protein belongs to the transketolase family. DXPS subfamily. In terms of assembly, homodimer. Mg(2+) serves as cofactor. It depends on thiamine diphosphate as a cofactor.

The enzyme catalyses D-glyceraldehyde 3-phosphate + pyruvate + H(+) = 1-deoxy-D-xylulose 5-phosphate + CO2. It participates in metabolic intermediate biosynthesis; 1-deoxy-D-xylulose 5-phosphate biosynthesis; 1-deoxy-D-xylulose 5-phosphate from D-glyceraldehyde 3-phosphate and pyruvate: step 1/1. Its function is as follows. Catalyzes the acyloin condensation reaction between C atoms 2 and 3 of pyruvate and glyceraldehyde 3-phosphate to yield 1-deoxy-D-xylulose-5-phosphate (DXP). This is 1-deoxy-D-xylulose-5-phosphate synthase from Acidovorax ebreus (strain TPSY) (Diaphorobacter sp. (strain TPSY)).